The chain runs to 153 residues: MSESVDSVELFTDGACKGNPGPGGWGALLVCKGVEKELWGGEANTTNNRMELLGAIRGLEALKRPCEVLLVTDSQYVMKGINEWMANWKKRGWKTAAKEPVKNADLWKALDEQVNRHKVTWKWVRGHIGHHGNERADQLANRGVDEVRGYKQS.

The RNase H type-1 domain occupies Ser4–Asp145. The Mg(2+) site is built by Asp13, Glu51, Asp73, and Asp137.

The protein belongs to the RNase H family. In terms of assembly, monomer. Requires Mg(2+) as cofactor.

It localises to the cytoplasm. The enzyme catalyses Endonucleolytic cleavage to 5'-phosphomonoester.. In terms of biological role, endonuclease that specifically degrades the RNA of RNA-DNA hybrids. The chain is Ribonuclease H from Pseudomonas fluorescens (strain Pf0-1).